Here is an 846-residue protein sequence, read N- to C-terminus: Homeobox protein 12 (846 aa).

8 stretches are compositionally biased toward low complexity: residues 78–94 (IIGS…VQAT), 160–170 (PLSSSSTVVPA), 237–249 (GNHN…YNYN), 289–301 (QPQS…QLQP), 309–321 (LQPQ…QSQQ), 331–352 (NNNN…NNNN), 394–443 (NYNQ…SNSN), and 458–482 (NNNN…QQIY). 6 disordered regions span residues 78 to 103 (IIGS…PSSS), 151 to 177 (IVQP…PPSV), 230 to 249 (NGNG…YNYN), 286 to 374 (GTKQ…SSSP), 394 to 482 (NYNQ…QQIY), and 515 to 571 (FKQN…NNQF). The span at 524–546 (NNDDDDDDDDDEEEEEEEEDDND) shows a compositional bias: acidic residues. Residues 553–604 (SYDEENNNNNNNNNNNNQFKNESIIIGDNYYEIINDRIKSIKQKLHFLEKNS) are a coiled coil. The segment covering 559–569 (NNNNNNNNNNN) has biased composition (low complexity). Positions 773-835 (DKKNRRTLND…NKRSREKNQR (63 aa)) form a DNA-binding region, homeobox.

The protein resides in the nucleus. Functionally, putative transcription factor. The chain is Homeobox protein 12 (hbx12) from Dictyostelium discoideum (Social amoeba).